The following is a 350-amino-acid chain: Biotin synthase (350 aa).

The region spanning 54–278 (REIQLSTLLS…TMPQSYVRLS (225 aa)) is the Radical SAM core domain. Cys69, Cys73, and Cys76 together coordinate [4Fe-4S] cluster. [2Fe-2S] cluster-binding residues include Cys113, Cys144, Cys204, and Arg276.

The protein belongs to the radical SAM superfamily. Biotin synthase family. As to quaternary structure, homodimer. Requires [4Fe-4S] cluster as cofactor. It depends on [2Fe-2S] cluster as a cofactor.

The catalysed reaction is (4R,5S)-dethiobiotin + (sulfur carrier)-SH + 2 reduced [2Fe-2S]-[ferredoxin] + 2 S-adenosyl-L-methionine = (sulfur carrier)-H + biotin + 2 5'-deoxyadenosine + 2 L-methionine + 2 oxidized [2Fe-2S]-[ferredoxin]. Its pathway is cofactor biosynthesis; biotin biosynthesis; biotin from 7,8-diaminononanoate: step 2/2. In terms of biological role, catalyzes the conversion of dethiobiotin (DTB) to biotin by the insertion of a sulfur atom into dethiobiotin via a radical-based mechanism. The chain is Biotin synthase from Neisseria gonorrhoeae (strain ATCC 700825 / FA 1090).